Reading from the N-terminus, the 576-residue chain is Vesicular glutamate transporter 1 (576 aa).

Topologically, residues 1 to 63 (MEFRKEEFKK…CTCFGLPRRY (63 aa)) are cytoplasmic. Residues 64–84 (IIAIMSGLGFCISFGIRCNLG) form a helical membrane-spanning segment. At 85–116 (VAIVSMVNNNTVYKGNKLVIEQAQFNWDPETV) the chain is on the vesicular side. N-linked (GlcNAc...) asparagine glycosylation occurs at Asn93. A helical transmembrane segment spans residues 117–137 (GMIHGSFFWGYIVTQIPGGYI). At 138-140 (CQK) the chain is on the cytoplasmic side. A helical transmembrane segment spans residues 141–161 (FAANRVFGFAIVATSTLNMLI). Topologically, residues 162–168 (PSAARVH) are vesicular. Residues 169–189 (FACVICVRILQGLVEGVTYPA) form a helical membrane-spanning segment. The Cytoplasmic portion of the chain corresponds to 190–208 (CHGIWSKWAPPLERSRLAT). A helical transmembrane segment spans residues 209–229 (TAFCGSYAGAVVAMPLAGVLV). Topologically, residues 230–236 (QYSGWSS) are vesicular. A helical membrane pass occupies residues 237 to 257 (VFYVYGSFGITWYMFWILVSY). Residues 258–297 (ESPAQHPTISEEERKYIEESIGESTGFMNPMAKFKAPWRK) are Cytoplasmic-facing. Residues 298-320 (FFTSMPVYAIIVANFCRSWTFYL) traverse the membrane as a helical segment. Topologically, residues 321–341 (LLISQPAYFEEVFGFAISKVG) are vesicular. The chain crosses the membrane as a helical span at residues 342–362 (LLSALPHLVMTIIVPIGGQIA). At 363–378 (DFLRTKRIMSTTNVRK) the chain is on the cytoplasmic side. The helical transmembrane segment at 379–399 (MMNCGGFGMEATLLLVVGYSH) threads the bilayer. Residues 400-401 (SR) are Vesicular-facing. Residues 402-422 (GVAISFLVLAVGFSGFAISGF) traverse the membrane as a helical segment. At 423–435 (NVNHLDIAPRYAS) the chain is on the cytoplasmic side. Residues 436 to 456 (ILMGISNGVGTLSGMVCPLIV) form a helical membrane-spanning segment. At 457–469 (GAMTKHKTREEWQ) the chain is on the vesicular side. The chain crosses the membrane as a helical span at residues 470–490 (YVFLIASLVHYGGVVFYGIFA). Over 491–576 (SGEKQPWAEP…YGTVAERDLS (86 aa)) the chain is Cytoplasmic. A disordered region spans residues 517–552 (ADESEEQTQAHGGYGSYGATQTTSQQNGGWATDWEK). Polar residues predominate over residues 534–545 (GATQTTSQQNGG).

This sequence belongs to the major facilitator superfamily. Sodium/anion cotransporter family. VGLUT subfamily.

It localises to the cytoplasmic vesicle. It is found in the secretory vesicle. Its subcellular location is the synaptic vesicle membrane. The protein resides in the cell membrane. The protein localises to the synapse. It localises to the synaptosome. It catalyses the reaction L-glutamate(out) = L-glutamate(in). The enzyme catalyses chloride(in) = chloride(out). It carries out the reaction 3 Na(+)(out) + phosphate(out) = 3 Na(+)(in) + phosphate(in). The catalysed reaction is phosphate(in) = phosphate(out). It catalyses the reaction K(+)(in) + H(+)(out) = K(+)(out) + H(+)(in). Chloride channel activity is allosterically activated by lumenal H(+) and Cl(-) leading to synaptic vesicles acidification. The L-glutamate transport activity is allosterically activated by lumenal H(+) and Cl(-). The allosteric activation by H(+) efficiently prevents non-vesicular efflux across the plasma membrane, thereby restricting L-glutamate transport activity to acidic membranes such as synaptic vesicles. Functionally, multifunctional transporter that transports L-glutamate as well as multiple ions such as chloride, proton, potassium, sodium and phosphate. At the synaptic vesicle membrane, mainly functions as an uniporter which transports preferentially L-glutamate but also phosphate from the cytoplasm into synaptic vesicles at presynaptic nerve terminals of excitatory neural cells. The L-glutamate or phosphate uniporter activity is electrogenic and is driven by the proton electrochemical gradient, mainly by the electrical gradient established by the vacuolar H(+)-ATPase across the synaptic vesicle membrane. In addition, functions as a chloride channel that allows a chloride permeation through the synaptic vesicle membrane that affects the proton electrochemical gradient and promotes synaptic vesicles acidification. Moreover, may function as a K(+)/H(+) antiport allowing to maintain the electrical gradient and to decrease chemical gradient and therefore sustain vesicular glutamate uptake. The vesicular K(+)/H(+) antiport activity is electroneutral. At the plasma membrane, following exocytosis, functions as a symporter of Na(+) and phosphate from the extracellular space to the cytoplasm allowing synaptic phosphate homeostasis regulation. The symporter activity is driven by an inside negative membrane potential and is electrogenic. Is necessary for synaptic signaling of visual-evoked responses from photoreceptors. This is Vesicular glutamate transporter 1 from Xenopus laevis (African clawed frog).